The primary structure comprises 430 residues: Type II methyltransferase M.Sau96I (430 aa).

Residues 9-63 (IEKMKNQNIKTQTELAEKIDISKSQLSFMFSDEYEPLKKNVIKLADVLKVSPNDI) enclose the HTH cro/C1-type domain. Positions 99 to 429 (YNVFETFAGA…KSLVHYLNQF (331 aa)) constitute an SAM-dependent MTase C5-type domain. Cys-174 is an active-site residue.

This sequence belongs to the class I-like SAM-binding methyltransferase superfamily. C5-methyltransferase family.

The enzyme catalyses a 2'-deoxycytidine in DNA + S-adenosyl-L-methionine = a 5-methyl-2'-deoxycytidine in DNA + S-adenosyl-L-homocysteine + H(+). Functionally, a methylase that recognizes the double-stranded sequence 5'-GGNCC-3', methylates C-4 on both strands, and protects the DNA from cleavage by the Sau96I endonuclease. The polypeptide is Type II methyltransferase M.Sau96I (Staphylococcus aureus).